The following is a 122-amino-acid chain: Large ribosomal subunit protein uL18 (122 aa).

Belongs to the universal ribosomal protein uL18 family. Part of the 50S ribosomal subunit; part of the 5S rRNA/L5/L18/L25 subcomplex. Contacts the 5S and 23S rRNAs.

In terms of biological role, this is one of the proteins that bind and probably mediate the attachment of the 5S RNA into the large ribosomal subunit, where it forms part of the central protuberance. The polypeptide is Large ribosomal subunit protein uL18 (Thermosipho melanesiensis (strain DSM 12029 / CIP 104789 / BI429)).